A 144-amino-acid polypeptide reads, in one-letter code: Transcriptional regulator MraZ (144 aa).

SpoVT-AbrB domains lie at 5-47 and 76-121; these read EYQY…PLDR and AHKT…SQER.

This sequence belongs to the MraZ family. As to quaternary structure, forms oligomers.

It is found in the cytoplasm. Its subcellular location is the nucleoid. The protein is Transcriptional regulator MraZ of Thermus thermophilus (strain ATCC BAA-163 / DSM 7039 / HB27).